The chain runs to 472 residues: GTPase HflX (472 aa).

The tract at residues Met1 to Ala21 is disordered. The Hflx-type G domain maps to Pro230–Ser396. GTP is bound by residues Gly236–Ser243, Phe261–Asp265, Asp283–Gly286, Asn349–Asp352, and Ser374–Lys376. Residues Ser243 and Thr263 each coordinate Mg(2+).

Belongs to the TRAFAC class OBG-HflX-like GTPase superfamily. HflX GTPase family. In terms of assembly, monomer. Associates with the 50S ribosomal subunit. Mg(2+) serves as cofactor.

Its subcellular location is the cytoplasm. GTPase that associates with the 50S ribosomal subunit and may have a role during protein synthesis or ribosome biogenesis. Specific for GTP. This Chlamydia pneumoniae (Chlamydophila pneumoniae) protein is GTPase HflX.